Consider the following 79-residue polypeptide: Morintide mO2 (79 aa).

An N-terminal signal peptide occupies residues 1–20 (MAKLSFLSLFLLCLVATATA). The region spanning 21–63 (QNCGRQAGNRACANGLCCSQYGFCGSTSEYCSRANGCQSNCRG) is the Chitin-binding type-1 domain. Cystine bridges form between cysteine 23–cysteine 38, cysteine 32–cysteine 44, cysteine 37–cysteine 51, and cysteine 57–cysteine 61. Residues 64-79 (GGGAGGAGGGAGGGSP) constitute a propeptide that is removed on maturation.

As to expression, leaves (at protein level).

Chitin-binding protein which functions in defense against chitin-containing fungal pathogens. In Moringa oleifera (Horseradish tree), this protein is Morintide mO2.